The chain runs to 274 residues: Protein RecA (274 aa).

Gly43–Thr50 contributes to the ATP binding site.

This sequence belongs to the RecA family.

The protein localises to the cytoplasm. In terms of biological role, can catalyze the hydrolysis of ATP in the presence of single-stranded DNA, the ATP-dependent uptake of single-stranded DNA by duplex DNA, and the ATP-dependent hybridization of homologous single-stranded DNAs. It interacts with LexA causing its activation and leading to its autocatalytic cleavage. The sequence is that of Protein RecA from Neisseria pharyngis.